The primary structure comprises 155 residues: Probable calcium-binding protein CML44 (155 aa).

EF-hand domains are found at residues 6 to 41 (ITTNDLRRMFKTLDKNQDGLVTLDELLWILDKLGWA), 85 to 120 (DNDEAIARAFNVFDVNGDGYISAEELRDVLERLGFE), and 130 to 155 (RMIRVHDKNLDGFVDFEEFKNMILHV). Residues aspartate 19, asparagine 21, aspartate 23, glutamate 30, aspartate 98, asparagine 100, aspartate 102, tyrosine 104, and glutamate 109 each contribute to the Ca(2+) site.

Potential calcium sensor. The polypeptide is Probable calcium-binding protein CML44 (CML44) (Arabidopsis thaliana (Mouse-ear cress)).